An 845-amino-acid chain; its full sequence is Alanine--tRNA ligase (845 aa).

Residues His-552, His-556, Cys-653, and His-657 each contribute to the Zn(2+) site.

This sequence belongs to the class-II aminoacyl-tRNA synthetase family. The cofactor is Zn(2+).

It is found in the cytoplasm. The enzyme catalyses tRNA(Ala) + L-alanine + ATP = L-alanyl-tRNA(Ala) + AMP + diphosphate. In terms of biological role, catalyzes the attachment of alanine to tRNA(Ala) in a two-step reaction: alanine is first activated by ATP to form Ala-AMP and then transferred to the acceptor end of tRNA(Ala). Also edits incorrectly charged Ser-tRNA(Ala) and Gly-tRNA(Ala) via its editing domain. The sequence is that of Alanine--tRNA ligase from Campylobacter fetus subsp. fetus (strain 82-40).